The chain runs to 54 residues: Large ribosomal subunit protein bL32 (54 aa).

A disordered region spans residues 1–26 (MAVQKNKPTRSKRGMRRSHDSLTAPH). A compositionally biased stretch (basic residues) spans 7–16 (KPTRSKRGMR).

Belongs to the bacterial ribosomal protein bL32 family.

The protein is Large ribosomal subunit protein bL32 of Buchnera aphidicola subsp. Acyrthosiphon pisum (strain 5A).